We begin with the raw amino-acid sequence, 292 residues long: Arabinose operon regulatory protein (292 aa).

Positions 8, 24, 38, 82, and 93 each coordinate alpha-L-arabinopyanose. The region spanning 180 to 279 (REACQYISDH…GASPSEFRAG (100 aa)) is the HTH araC/xylS-type domain. 2 consecutive DNA-binding regions (H-T-H motif) follow at residues 198–219 (ASVA…RQQL) and 246–269 (IATV…KKCT).

As to quaternary structure, homodimer.

It localises to the cytoplasm. Arabinose converts the repressor form of AraC to the activator form to regulate the araBAD promoter. In the absence of arabinose, AraC binds to the araO2 and araI1 half-sites in the promoter region of the araBAD operon, leading to the formation of a DNA loop that blocks access of RNA polymerase to the promoter. In the presence of arabinose and the cyclic AMP receptor protein (CRP), it binds to the adjacent half-sites araI1 and araI2, leading to the binding of RNA polymerase to the promoter region and transcription of the araBAD operon. AraI1 acts as a switch mechanism allowing both the repressor and the activator forms of AraC protein to regulate the araBAD promoter. Inhibited by D-fucose, which binds competitively to the same site on the protein. Functionally, transcription factor that regulates the expression of several genes involved in the transport and metabolism of L-arabinose. Functions both as a positive and a negative regulator. In the presence of arabinose, activates the expression of the araBAD, araE, araFGH and araJ promoters. In the absence of arabinose, negatively regulates the araBAD operon. Represses its own transcription. Acts by binding directly to DNA. The chain is Arabinose operon regulatory protein from Escherichia coli (strain K12).